Here is a 240-residue protein sequence, read N- to C-terminus: Coatomer subunit delta (240 aa).

Residues 215–226 (AAAKASSAPKAK) are compositionally biased toward low complexity. The disordered stretch occupies residues 215–240 (AAAKASSAPKAKGMQLGKKKNTSLLY). Basic residues predominate over residues 231–240 (GKKKNTSLLY).

The protein belongs to the adaptor complexes medium subunit family. Delta-COP subfamily. As to quaternary structure, oligomeric complex that consists of at least the alpha, beta, beta', gamma, delta, epsilon and zeta subunits.

It localises to the cytoplasm. It is found in the nucleus. Functionally, the coatomer is a cytosolic protein complex that binds to dilysine motifs and reversibly associates with Golgi non-clathrin-coated vesicles, which further mediate biosynthetic protein transport from the ER, via the Golgi up to the trans Golgi network. Coatomer complex is required for budding from Golgi membranes, and is essential for the retrograde Golgi-to-ER transport of dilysine-tagged proteins. This chain is Coatomer subunit delta (ret2), found in Schizosaccharomyces pombe (strain 972 / ATCC 24843) (Fission yeast).